The sequence spans 140 residues: UPF0299 membrane protein CGSHiGG_01475 (140 aa).

4 helical membrane-spanning segments follow: residues 1–21 (MIQK…MLYL), 33–52 (VPGS…TRVI), 60–80 (GASL…VGII), and 92–112 (ILLV…GFLG).

This sequence belongs to the UPF0299 family.

The protein localises to the cell inner membrane. This Haemophilus influenzae (strain PittGG) protein is UPF0299 membrane protein CGSHiGG_01475.